A 152-amino-acid chain; its full sequence is Small ribosomal subunit protein uS19u (152 aa).

This sequence belongs to the universal ribosomal protein uS19 family.

It is found in the cytoplasm. The protein is Small ribosomal subunit protein uS19u (RPS15A) of Arabidopsis thaliana (Mouse-ear cress).